The following is a 442-amino-acid chain: GTPase Der (442 aa).

2 consecutive EngA-type G domains span residues 2-168 (ATVL…EEAG) and 182-356 (LKVA…EKID). GTP-binding positions include 8 to 15 (GRPNVGKS), 55 to 59 (DTCGL), 118 to 121 (NKVE), 188 to 195 (GKPNAGKS), 235 to 239 (DTAGM), and 301 to 304 (NKSD). The 86-residue stretch at 357–442 (LRIPTGLLNN…PIFIKLRRKK (86 aa)) folds into the KH-like domain.

The protein belongs to the TRAFAC class TrmE-Era-EngA-EngB-Septin-like GTPase superfamily. EngA (Der) GTPase family. Associates with the 50S ribosomal subunit.

In terms of biological role, GTPase that plays an essential role in the late steps of ribosome biogenesis. In Kosmotoga olearia (strain ATCC BAA-1733 / DSM 21960 / TBF 19.5.1), this protein is GTPase Der.